Here is a 115-residue protein sequence, read N- to C-terminus: Large ribosomal subunit protein uL22 (115 aa).

Belongs to the universal ribosomal protein uL22 family. In terms of assembly, part of the 50S ribosomal subunit.

This protein binds specifically to 23S rRNA; its binding is stimulated by other ribosomal proteins, e.g. L4, L17, and L20. It is important during the early stages of 50S assembly. It makes multiple contacts with different domains of the 23S rRNA in the assembled 50S subunit and ribosome. In terms of biological role, the globular domain of the protein is located near the polypeptide exit tunnel on the outside of the subunit, while an extended beta-hairpin is found that lines the wall of the exit tunnel in the center of the 70S ribosome. The polypeptide is Large ribosomal subunit protein uL22 (Coxiella burnetii (strain CbuG_Q212) (Coxiella burnetii (strain Q212))).